The sequence spans 255 residues: 1-(5-phosphoribosyl)-5-[(5-phosphoribosylamino)methylideneamino] imidazole-4-carboxamide isomerase (255 aa).

Aspartate 8 serves as the catalytic Proton acceptor. Aspartate 129 (proton donor) is an active-site residue.

Belongs to the HisA/HisF family.

Its subcellular location is the cytoplasm. The catalysed reaction is 1-(5-phospho-beta-D-ribosyl)-5-[(5-phospho-beta-D-ribosylamino)methylideneamino]imidazole-4-carboxamide = 5-[(5-phospho-1-deoxy-D-ribulos-1-ylimino)methylamino]-1-(5-phospho-beta-D-ribosyl)imidazole-4-carboxamide. It participates in amino-acid biosynthesis; L-histidine biosynthesis; L-histidine from 5-phospho-alpha-D-ribose 1-diphosphate: step 4/9. The sequence is that of 1-(5-phosphoribosyl)-5-[(5-phosphoribosylamino)methylideneamino] imidazole-4-carboxamide isomerase from Prochlorococcus marinus (strain MIT 9515).